Reading from the N-terminus, the 774-residue chain is Transmembrane GTPase fzo-1 (774 aa).

A disordered region spans residues 1 to 29 (MSGTASLVHTLPASGDSNHRGLHSLKNSR). Over 1–617 (MSGTASLVHT…EEQAMMTQMV (617 aa)) the chain is Cytoplasmic. Basic residues predominate over residues 20–29 (RGLHSLKNSR). Residues 51–71 (YGELKDNVAELEGVYKDIKEN) adopt a coiled-coil conformation. In terms of domain architecture, Dynamin-type G spans 97–352 (QRDNMKVVFF…TRALEFQNFE (256 aa)). Positions 107 to 114 (GRTSNGKS) are G1 motif. GTP is bound at residue 110 to 115 (SNGKST). Positions 133–134 (TT) are G2 motif. Residues 211–214 (DSPG) are G3 motif. GTP is bound at residue 270-273 (NRWD). The segment at 270-273 (NRWD) is G4 motif. E300 is a region of interest (G5 motif). S317 serves as a coordination point for GTP. The stretch at 385-415 (NLNSVLTSAAEQRSKLQNNLNESTRTFNECR) forms a coiled coil. A helical membrane pass occupies residues 618–638 (LTSAAFLANGSLGVLVVGGIV). The Mitochondrial intermembrane segment spans residues 639–640 (YK). The helical transmembrane segment at 641–661 (AVGWRVIAVGGAAYAGLYAWE) threads the bilayer. Residues 662 to 774 (RMRWNSGAKE…YLRSDSPPTP (113 aa)) lie on the Cytoplasmic side of the membrane.

It belongs to the TRAFAC class dynamin-like GTPase superfamily. Dynamin/Fzo/YdjA family. Mitofusin subfamily. Interacts with ced-9; interaction may be suppressed by interaction of ced-9 with egl-1.

The protein resides in the mitochondrion outer membrane. The enzyme catalyses GTP + H2O = GDP + phosphate + H(+). In terms of biological role, probable transmembrane GTPase. Mediates mitochondrial fusion. Fusion of mitochondria occurs in many cell types and constitutes an important step in mitochondria morphology, which is balanced between fusion and fission. Dispensable for normal apoptotic processes during embryonic development. The protein is Transmembrane GTPase fzo-1 of Caenorhabditis elegans.